The following is a 283-amino-acid chain: Phosphatidylserine decarboxylase proenzyme (283 aa).

Catalysis depends on charge relay system; for autoendoproteolytic cleavage activity residues aspartate 90, histidine 143, and serine 248. Catalysis depends on serine 248, which acts as the Schiff-base intermediate with substrate; via pyruvic acid; for decarboxylase activity. The residue at position 248 (serine 248) is a Pyruvic acid (Ser); by autocatalysis.

The protein belongs to the phosphatidylserine decarboxylase family. PSD-B subfamily. Prokaryotic type I sub-subfamily. In terms of assembly, heterodimer of a large membrane-associated beta subunit and a small pyruvoyl-containing alpha subunit. It depends on pyruvate as a cofactor. Is synthesized initially as an inactive proenzyme. Formation of the active enzyme involves a self-maturation process in which the active site pyruvoyl group is generated from an internal serine residue via an autocatalytic post-translational modification. Two non-identical subunits are generated from the proenzyme in this reaction, and the pyruvate is formed at the N-terminus of the alpha chain, which is derived from the carboxyl end of the proenzyme. The autoendoproteolytic cleavage occurs by a canonical serine protease mechanism, in which the side chain hydroxyl group of the serine supplies its oxygen atom to form the C-terminus of the beta chain, while the remainder of the serine residue undergoes an oxidative deamination to produce ammonia and the pyruvoyl prosthetic group on the alpha chain. During this reaction, the Ser that is part of the protease active site of the proenzyme becomes the pyruvoyl prosthetic group, which constitutes an essential element of the active site of the mature decarboxylase.

It is found in the cell membrane. It catalyses the reaction a 1,2-diacyl-sn-glycero-3-phospho-L-serine + H(+) = a 1,2-diacyl-sn-glycero-3-phosphoethanolamine + CO2. It participates in phospholipid metabolism; phosphatidylethanolamine biosynthesis; phosphatidylethanolamine from CDP-diacylglycerol: step 2/2. In terms of biological role, catalyzes the formation of phosphatidylethanolamine (PtdEtn) from phosphatidylserine (PtdSer). This chain is Phosphatidylserine decarboxylase proenzyme, found in Francisella tularensis subsp. holarctica (strain OSU18).